The following is a 238-amino-acid chain: RNA-binding protein pno1 (238 aa).

The 50-residue stretch at 162-211 folds into the KH domain; the sequence is QSRAIGRLAGKGGRTKFTIENVTKTRIVLADSKIHILGSYQNIQLARRAI.

This sequence belongs to the PNO1 family.

The protein localises to the nucleus. The protein resides in the nucleolus. The chain is RNA-binding protein pno1 (l(1)G0004) from Drosophila pseudoobscura pseudoobscura (Fruit fly).